The primary structure comprises 356 residues: D-alanine--D-alanine ligase (356 aa).

In terms of domain architecture, ATP-grasp spans 134–339 (KQLFAHRGLP…YADLITKLIE (206 aa)). Residue 167–222 (KDKLEFPVFVKPANLGSSVGISKCNNEEELKSGIEEAFQFDRKLVIEQGIEAREIE) coordinates ATP. The Mg(2+) site is built by D293, E306, and N308.

Belongs to the D-alanine--D-alanine ligase family. It depends on Mg(2+) as a cofactor. The cofactor is Mn(2+).

Its subcellular location is the cytoplasm. It catalyses the reaction 2 D-alanine + ATP = D-alanyl-D-alanine + ADP + phosphate + H(+). The protein operates within cell wall biogenesis; peptidoglycan biosynthesis. Functionally, cell wall formation. The chain is D-alanine--D-alanine ligase from Staphylococcus carnosus (strain TM300).